A 460-amino-acid polypeptide reads, in one-letter code: Adenosylhomocysteinase (460 aa).

Residues threonine 83, aspartate 158, and glutamate 184 each contribute to the substrate site. Residue threonine 185–threonine 187 participates in NAD(+) binding. Residues lysine 214 and aspartate 218 each contribute to the substrate site. NAD(+) is bound by residues asparagine 219, glycine 248–glycine 253, glutamate 271, isoleucine 327–histidine 329, and asparagine 373.

It belongs to the adenosylhomocysteinase family. Requires NAD(+) as cofactor.

It is found in the cytoplasm. It carries out the reaction S-adenosyl-L-homocysteine + H2O = L-homocysteine + adenosine. The protein operates within amino-acid biosynthesis; L-homocysteine biosynthesis; L-homocysteine from S-adenosyl-L-homocysteine: step 1/1. May play a key role in the regulation of the intracellular concentration of adenosylhomocysteine. In Bdellovibrio bacteriovorus (strain ATCC 15356 / DSM 50701 / NCIMB 9529 / HD100), this protein is Adenosylhomocysteinase.